A 392-amino-acid chain; its full sequence is Phosphoglycerate kinase (392 aa).

Residues 21 to 23, Arg-36, 59 to 62, Arg-113, and Arg-146 each bind substrate; these read DFN and HLGR. Residues Lys-197, Glu-319, and 345–348 contribute to the ATP site; that span reads GGDT.

This sequence belongs to the phosphoglycerate kinase family. Monomer.

It is found in the cytoplasm. The enzyme catalyses (2R)-3-phosphoglycerate + ATP = (2R)-3-phospho-glyceroyl phosphate + ADP. It functions in the pathway carbohydrate degradation; glycolysis; pyruvate from D-glyceraldehyde 3-phosphate: step 2/5. This is Phosphoglycerate kinase from Francisella tularensis subsp. novicida (strain U112).